Here is a 164-residue protein sequence, read N- to C-terminus: UPF0114 protein YqhA (164 aa).

3 helical membrane-spanning segments follow: residues 10–32 (YASRWLLAPVYFGLSLALIALAL), 53–75 (LILVLLSLVDMTLVGGLLVMVMF), and 136–155 (LMWYVIIHLTFVLSAFVMGY).

The protein belongs to the UPF0114 family.

The protein localises to the cell membrane. This is UPF0114 protein YqhA from Salmonella typhi.